The primary structure comprises 1222 residues: ATP-dependent helicase/nuclease subunit A (1222 aa).

Residues 39 to 495 enclose the UvrD-like helicase ATP-binding domain; that stretch reads QKRTAQQIEA…ILLKENFRSQ (457 aa). An ATP-binding site is contributed by 60-67; the sequence is ASAGSGKT. The UvrD-like helicase C-terminal domain maps to 524-810; the sequence is QLIAGSHAQT…NLMTIHKSKG (287 aa).

It belongs to the helicase family. AddA subfamily. Heterodimer of AddA and AddB/RexB. Requires Mg(2+) as cofactor.

The catalysed reaction is Couples ATP hydrolysis with the unwinding of duplex DNA by translocating in the 3'-5' direction.. It carries out the reaction ATP + H2O = ADP + phosphate + H(+). The heterodimer acts as both an ATP-dependent DNA helicase and an ATP-dependent, dual-direction single-stranded exonuclease. Recognizes the chi site generating a DNA molecule suitable for the initiation of homologous recombination. The AddA nuclease domain is required for chi fragment generation; this subunit has the helicase and 3' -&gt; 5' nuclease activities. The sequence is that of ATP-dependent helicase/nuclease subunit A from Streptococcus pyogenes serotype M28 (strain MGAS6180).